The primary structure comprises 393 residues: Fractalkine (393 aa).

The signal sequence occupies residues 1-24 (MAPSQLAWLLRLAAFFHLCTLLAG). The tract at residues 25–100 (QHLGMTKCNI…HQTAALTRNG (76 aa)) is chemokine and involved in interaction with ITGAV:ITGB3 and ITGA4:ITGB1. Over 25–337 (QHLGMTKCNI…PDSQAATRRQ (313 aa)) the chain is Extracellular. Disulfide bonds link Cys-32/Cys-58 and Cys-36/Cys-74. Asn-33 carries N-linked (GlcNAc...) asparagine glycosylation. The segment at 101–337 (GKFEKRVDNV…PDSQAATRRQ (237 aa)) is mucin-like stalk. Disordered stretches follow at residues 114-184 (ITSA…PQST) and 213-303 (EKAT…SGSQ). Composition is skewed to polar residues over residues 153 to 172 (GTSQ…TSKA) and 223 to 240 (ALST…NVGS). Residues 338–358 (AVGLLAFLGLLFCLGVAMFAY) traverse the membrane as a helical segment. At 359–393 (QSLQGCPRKMAGEMVEGLRYVPRSCGSNSYVLVPV) the chain is on the cytoplasmic side.

The protein belongs to the intercrine delta family. In terms of assembly, monomer. Forms a ternary complex with CX3CR1 and ITGAV:ITGB3 or ITGA4:ITGB1. In terms of processing, a soluble short form may be released by proteolytic cleavage from the long membrane-anchored form. Highest levels in brain (neurons). Significant levels in kidney, heart, lung and adrenal gland.

The protein resides in the cell membrane. The protein localises to the secreted. Its function is as follows. Chemokine that acts as a ligand for both CX3CR1 and integrins ITGAV:ITGB3 and ITGA4:ITGB1. The CX3CR1-CX3CL1 signaling exerts distinct functions in different tissue compartments, such as immune response, inflammation, cell adhesion and chemotaxis. Regulates leukocyte adhesion and migration processes at the endothelium. Can activate integrins in both a CX3CR1-dependent and CX3CR1-independent manner. In the presence of CX3CR1, activates integrins by binding to the classical ligand-binding site (site 1) in integrins. In the absence of CX3CR1, binds to a second site (site 2) in integrins which is distinct from site 1 and enhances the binding of other integrin ligands to site 1. In terms of biological role, the soluble form is chemotactic for T-cells and monocytes, but not for neutrophils. The membrane-bound form promotes adhesion of those leukocytes to endothelial cells. This Rattus norvegicus (Rat) protein is Fractalkine (Cx3cl1).